Consider the following 241-residue polypeptide: Uridylate kinase (241 aa).

Glycine 9–serine 10 provides a ligand contact to ATP. Residue glycine 44 coordinates UMP. Positions 45 and 49 each coordinate ATP. UMP contacts are provided by residues aspartate 66 and isoleucine 114 to threonine 120. ATP contacts are provided by threonine 140, tyrosine 146, and aspartate 149.

It belongs to the UMP kinase family. In terms of assembly, homohexamer.

Its subcellular location is the cytoplasm. It carries out the reaction UMP + ATP = UDP + ADP. It functions in the pathway pyrimidine metabolism; CTP biosynthesis via de novo pathway; UDP from UMP (UMPK route): step 1/1. With respect to regulation, inhibited by UTP. Its function is as follows. Catalyzes the reversible phosphorylation of UMP to UDP. The polypeptide is Uridylate kinase (Haloquadratum walsbyi (strain DSM 16790 / HBSQ001)).